The following is a 700-amino-acid chain: E3 ubiquitin-protein ligase SspH1 (700 aa).

Positions M1–M395 are interaction with target proteins. LRR repeat units follow at residues H217–L238, R239–Q257, G258–L279, G280–P297, A298–L319, Q320–P337, G338–S360, and S361–R381. Positions A396–E403 are linker. Residues A404 to N700 form an E3 ubiquitin-protein ligase catalytic domain region. In terms of domain architecture, NEL spans A406 to N700. Residue C492 is the Glycyl thioester intermediate of the active site.

Belongs to the LRR-containing bacterial E3 ligase family. As to quaternary structure, interacts (via leucine-rich repeat region) with host PKN1 (via the second REM repeat). Ubiquitinated in the presence of host E1 ubiquitin-activating enzyme, E2 ubiquitin-conjugating enzyme and ubiquitin.

The protein resides in the secreted. It localises to the host cytoplasm. It is found in the host nucleus. It carries out the reaction S-ubiquitinyl-[E2 ubiquitin-conjugating enzyme]-L-cysteine + [acceptor protein]-L-lysine = [E2 ubiquitin-conjugating enzyme]-L-cysteine + N(6)-ubiquitinyl-[acceptor protein]-L-lysine.. With respect to regulation, exists in an autoinhibited state in the absence of substrate protein, due to interactions of the leucine-rich repeat domain with the catalytic domain. Is activated upon binding to a substrate protein. In terms of biological role, effector proteins function to alter host cell physiology and promote bacterial survival in host tissues. This protein is an E3 ubiquitin-protein ligase that interferes with the host's ubiquitination pathway and targets host proteins for proteasomal degradation. Can ubiquitinate ubiquitin, giving rise to polyubiquitin chains (in vitro). Polyubiquitinates host PKN1, leading to its proteasomal degradation. Down-modulates production of host pro-inflammatory cytokines by inhibiting NF-kappa-B-dependent gene expression; this depends only partially on its E3 ubiquitin-protein ligase activity. The chain is E3 ubiquitin-protein ligase SspH1 (sspH1) from Salmonella typhimurium (strain 14028s / SGSC 2262).